The primary structure comprises 286 residues: Bifunctional protein FolD (286 aa).

Residues Gly166–Ser168, Ser191, and Ile232 each bind NADP(+).

Belongs to the tetrahydrofolate dehydrogenase/cyclohydrolase family. In terms of assembly, homodimer.

It carries out the reaction (6R)-5,10-methylene-5,6,7,8-tetrahydrofolate + NADP(+) = (6R)-5,10-methenyltetrahydrofolate + NADPH. The enzyme catalyses (6R)-5,10-methenyltetrahydrofolate + H2O = (6R)-10-formyltetrahydrofolate + H(+). It functions in the pathway one-carbon metabolism; tetrahydrofolate interconversion. Its function is as follows. Catalyzes the oxidation of 5,10-methylenetetrahydrofolate to 5,10-methenyltetrahydrofolate and then the hydrolysis of 5,10-methenyltetrahydrofolate to 10-formyltetrahydrofolate. This chain is Bifunctional protein FolD, found in Alkalilimnicola ehrlichii (strain ATCC BAA-1101 / DSM 17681 / MLHE-1).